A 574-amino-acid chain; its full sequence is Septation ring formation regulator EzrA (574 aa).

Topologically, residues M1–L7 are extracellular. A helical membrane pass occupies residues L8–I26. The Cytoplasmic portion of the chain corresponds to R27 to F574. Coiled coils occupy residues N102–L131, E161–L190, V276–K379, and Q459–E493.

It belongs to the EzrA family.

The protein localises to the cell membrane. In terms of biological role, negative regulator of FtsZ ring formation; modulates the frequency and position of FtsZ ring formation. Inhibits FtsZ ring formation at polar sites. Interacts either with FtsZ or with one of its binding partners to promote depolymerization. This is Septation ring formation regulator EzrA from Streptococcus equi subsp. zooepidemicus (strain MGCS10565).